The primary structure comprises 428 residues: Enolase (428 aa).

Gln165 lines the (2R)-2-phosphoglycerate pocket. Glu207 (proton donor) is an active-site residue. Mg(2+) is bound by residues Asp244, Glu285, and Asp312. Lys337, Arg366, Ser367, and Lys388 together coordinate (2R)-2-phosphoglycerate. Lys337 serves as the catalytic Proton acceptor.

This sequence belongs to the enolase family. In terms of assembly, component of the RNA degradosome, a multiprotein complex involved in RNA processing and mRNA degradation. It depends on Mg(2+) as a cofactor.

It is found in the cytoplasm. The protein localises to the secreted. The protein resides in the cell surface. The enzyme catalyses (2R)-2-phosphoglycerate = phosphoenolpyruvate + H2O. The protein operates within carbohydrate degradation; glycolysis; pyruvate from D-glyceraldehyde 3-phosphate: step 4/5. Catalyzes the reversible conversion of 2-phosphoglycerate (2-PG) into phosphoenolpyruvate (PEP). It is essential for the degradation of carbohydrates via glycolysis. This chain is Enolase, found in Coxiella burnetii (strain CbuK_Q154) (Coxiella burnetii (strain Q154)).